Here is a 601-residue protein sequence, read N- to C-terminus: Elongation factor 4 (601 aa).

The region spanning 7–189 (DTIRNFSIVA…AIVAKLPPPK (183 aa)) is the tr-type G domain. GTP-binding positions include 19 to 24 (DHGKST) and 136 to 139 (NKID).

This sequence belongs to the TRAFAC class translation factor GTPase superfamily. Classic translation factor GTPase family. LepA subfamily.

The protein resides in the cell inner membrane. The catalysed reaction is GTP + H2O = GDP + phosphate + H(+). In terms of biological role, required for accurate and efficient protein synthesis under certain stress conditions. May act as a fidelity factor of the translation reaction, by catalyzing a one-codon backward translocation of tRNAs on improperly translocated ribosomes. Back-translocation proceeds from a post-translocation (POST) complex to a pre-translocation (PRE) complex, thus giving elongation factor G a second chance to translocate the tRNAs correctly. Binds to ribosomes in a GTP-dependent manner. In Methylobacterium sp. (strain 4-46), this protein is Elongation factor 4.